We begin with the raw amino-acid sequence, 534 residues long: Protein tweety homolog 2 (534 aa).

The Extracellular segment spans residues 1-44 (MAAARVEYIAPWWVYWLHNFPHVDLSLRQKSPDFNPKDPGYQQT). Residues 45-65 (LLFVALIVALCAAVNLLFVSV) form a helical membrane-spanning segment. At 66-87 (YLICLCCCKKEDETETKKTSSC) the chain is on the cytoplasmic side. Residues 88–108 (CVTWTAAVSGLLCCAAVGIGF) form a helical membrane-spanning segment. Topologically, residues 109–213 (YGNSETNDGV…QTSTIEYYRW (105 aa)) are extracellular. Ca(2+) is bound by residues Glu-113 and Asp-116. N-linked (GlcNAc...) asparagine glycosylation is present at Asn-129. Residues 164–166 (RGD) carry the RGD motif. Asn-197 carries N-linked (GlcNAc...) asparagine glycosylation. Residues 214–234 (LSYLLLFISYVVICLVTCVGL) traverse the membrane as a helical segment. At 235–240 (AKKSKC) the chain is on the cytoplasmic side. The chain crosses the membrane as a helical span at residues 241–261 (LLLIMLCFGLIALMLSWTSLA). Over 262–388 (LETSSAMGTS…IGICYDGVEG (127 aa)) the chain is Extracellular. Cystine bridges form between Cys-274–Cys-382 and Cys-300–Cys-367. N-linked (GlcNAc...) asparagine glycans are attached at residues Asn-283 and Asn-352. Residues 389-409 (MLYLGLFSLLAALAFTAMVCA) traverse the membrane as a helical segment. The Cytoplasmic segment spans residues 410–534 (MPQAWKHLEA…SSIYSNVFPA (125 aa)).

Belongs to the tweety family. Forms cis-homodimers in the presence of Ca(+2) and forms monomers and trans-dimers in the absence of Ca(2+).

The protein resides in the cell membrane. It carries out the reaction chloride(in) = chloride(out). The enzyme catalyses L-glutamate(out) = L-glutamate(in). Its function is as follows. May act as a calcium-independent, swelling-dependent volume-regulated anion channel (VRAC-swell) which plays a pivotal role in the process of regulatory volume decrease (RVD) in the brain through the efflux of anions like chloride and organic osmolytes like glutamate. Probable large-conductance Ca(2+)-activated chloride channel. The protein is Protein tweety homolog 2 (ttyh2) of Xenopus tropicalis (Western clawed frog).